The sequence spans 810 residues: Lon protease (810 aa).

One can recognise a Lon N-terminal domain in the interval 40 to 233; that stretch reads LIIVPVRGFV…MVAKLLAQRI (194 aa). 385–392 contacts ATP; that stretch reads GPPGVGKT. Residues 621-802 enclose the Lon proteolytic domain; it reads LSVPGVATGL…DDAMAAAFEG (182 aa). Catalysis depends on residues S708 and K751.

Belongs to the peptidase S16 family. Homohexamer. Organized in a ring with a central cavity.

It is found in the cytoplasm. The enzyme catalyses Hydrolysis of proteins in presence of ATP.. Functionally, ATP-dependent serine protease that mediates the selective degradation of mutant and abnormal proteins as well as certain short-lived regulatory proteins. Required for cellular homeostasis and for survival from DNA damage and developmental changes induced by stress. Degrades polypeptides processively to yield small peptide fragments that are 5 to 10 amino acids long. Binds to DNA in a double-stranded, site-specific manner. This chain is Lon protease, found in Methylocella silvestris (strain DSM 15510 / CIP 108128 / LMG 27833 / NCIMB 13906 / BL2).